The sequence spans 261 residues: Ribonuclease PH (261 aa).

Phosphate-binding positions include arginine 87 and 125–127; that span reads GTR.

The protein belongs to the RNase PH family. As to quaternary structure, homohexameric ring arranged as a trimer of dimers.

The catalysed reaction is tRNA(n+1) + phosphate = tRNA(n) + a ribonucleoside 5'-diphosphate. In terms of biological role, phosphorolytic 3'-5' exoribonuclease that plays an important role in tRNA 3'-end maturation. Removes nucleotide residues following the 3'-CCA terminus of tRNAs; can also add nucleotides to the ends of RNA molecules by using nucleoside diphosphates as substrates, but this may not be physiologically important. Probably plays a role in initiation of 16S rRNA degradation (leading to ribosome degradation) during starvation. In Caldanaerobacter subterraneus subsp. tengcongensis (strain DSM 15242 / JCM 11007 / NBRC 100824 / MB4) (Thermoanaerobacter tengcongensis), this protein is Ribonuclease PH.